The sequence spans 427 residues: Glutamate-1-semialdehyde 2,1-aminomutase (427 aa).

K265 bears the N6-(pyridoxal phosphate)lysine mark.

Belongs to the class-III pyridoxal-phosphate-dependent aminotransferase family. HemL subfamily. In terms of assembly, homodimer. It depends on pyridoxal 5'-phosphate as a cofactor.

The protein localises to the cytoplasm. The catalysed reaction is (S)-4-amino-5-oxopentanoate = 5-aminolevulinate. It participates in porphyrin-containing compound metabolism; protoporphyrin-IX biosynthesis; 5-aminolevulinate from L-glutamyl-tRNA(Glu): step 2/2. The sequence is that of Glutamate-1-semialdehyde 2,1-aminomutase from Burkholderia orbicola (strain MC0-3).